A 120-amino-acid chain; its full sequence is UPF0344 protein LMOf2365_2298 (120 aa).

4 helical membrane passes run Gly3–Ile23, Met33–Val53, Ile62–Leu82, and Gly92–Leu112.

It belongs to the UPF0344 family.

It is found in the cell membrane. In Listeria monocytogenes serotype 4b (strain F2365), this protein is UPF0344 protein LMOf2365_2298.